The following is a 620-amino-acid chain: Acetylcholinesterase 1 (620 aa).

The N-terminal stretch at 1 to 31 is a signal peptide; it reads MRYSLLFFIFLPCVITAVDLIHLHDGSPLFG. Asn-74 carries N-linked (GlcNAc...) asparagine glycosylation. An intrachain disulfide couples Cys-82 to Cys-109. The active-site Acyl-ester intermediate is Ser-216. A disulfide bridge links Cys-270 with Cys-286. N-linked (GlcNAc...) asparagine glycosylation occurs at Asn-272. Active-site charge relay system residues include Glu-346 and His-468. Residues Cys-430 and Cys-558 are joined by a disulfide bond. Asn-486 and Asn-536 each carry an N-linked (GlcNAc...) asparagine glycan.

Belongs to the type-B carboxylesterase/lipase family. As to quaternary structure, oligomer composed of disulfide-linked homodimers.

Its subcellular location is the synapse. The protein localises to the secreted. It localises to the cell membrane. The enzyme catalyses acetylcholine + H2O = choline + acetate + H(+). In terms of biological role, rapidly hydrolyzes choline released into the synapse. This Caenorhabditis briggsae protein is Acetylcholinesterase 1 (ace-1).